Consider the following 125-residue polypeptide: Fluoride-specific ion channel FluC (125 aa).

4 helical membrane-spanning segments follow: residues 7–27 (FFIV…MAVV), 36–56 (GFPY…GFLS), 63–83 (PYGR…FSTF), and 96–116 (FIFA…GVFC). G75 and T78 together coordinate Na(+).

The protein belongs to the fluoride channel Fluc/FEX (TC 1.A.43) family.

It is found in the cell inner membrane. It carries out the reaction fluoride(in) = fluoride(out). Its activity is regulated as follows. Na(+) is not transported, but it plays an essential structural role and its presence is essential for fluoride channel function. Fluoride-specific ion channel. Important for reducing fluoride concentration in the cell, thus reducing its toxicity. The sequence is that of Fluoride-specific ion channel FluC from Elusimicrobium minutum (strain Pei191).